A 713-amino-acid chain; its full sequence is Low-density lipoprotein receptor-related protein 10 (713 aa).

An N-terminal signal peptide occupies residues 1–16 (MLLATLLLLLLGGALA). At 17 to 440 (HPDRIIFPNH…WDCSYVLPRK (424 aa)) the chain is on the extracellular side. Intrachain disulfides connect Cys28/Cys57 and Cys80/Cys98. One can recognise a CUB 1 domain in the interval 28–136 (CEDPPAVLLE…QGFLLSYSQD (109 aa)). An N-linked (GlcNAc...) asparagine glycan is attached at Asn56. A glycan (N-linked (GlcNAc...) asparagine) is linked at Asn111. One can recognise an LDL-receptor class A 1 domain in the interval 139–175 (MCLQEEFQCLNHRCVSAVQRCDGVDACGDGSDEAGCS). 4 disulfides stabilise this stretch: Cys140-Cys152, Cys147-Cys165, Cys159-Cys174, and Cys192-Cys220. The region spanning 192–305 (CNVTLEDFYG…RGFNATYHVR (114 aa)) is the CUB 2 domain. N-linked (GlcNAc...) asparagine glycosylation is found at Asn193 and Asn299. 3 LDL-receptor class A domains span residues 307–354 (YCLP…EDCP), 355–397 (GCPP…RRCR), and 398–434 (HCQP…WDCS). 9 cysteine pairs are disulfide-bonded: Cys308/Cys331, Cys315/Cys344, Cys338/Cys353, Cys356/Cys374, Cys363/Cys387, Cys381/Cys396, Cys399/Cys411, Cys406/Cys424, and Cys418/Cys433. The helical transmembrane segment at 441–461 (VITAAVIGSLVCGLLLVIALG) threads the bilayer. At 462–713 (CTCKLYAIRT…AEAEDEPLLT (252 aa)) the chain is on the cytoplasmic side. Residues 564–637 (GLLPRTNTPA…SPAPTTVPEA (74 aa)) are disordered. A compositionally biased stretch (polar residues) spans 569-584 (TNTPARASEARSQVTP). Position 596 is a phosphothreonine (Thr596). Positions 621–636 (PLPSASTSPAPTTVPE) are enriched in low complexity.

The protein belongs to the LDLR family. Expressed in blood leukocyte, lung, placenta, small intestine, liver, kidney, spleen, thymus, colon, skeletal muscle and heart.

It is found in the membrane. The protein localises to the coated pit. Functionally, probable receptor, which is involved in the internalization of lipophilic molecules and/or signal transduction. May be involved in the uptake of lipoprotein APOE in liver. This Homo sapiens (Human) protein is Low-density lipoprotein receptor-related protein 10 (LRP10).